We begin with the raw amino-acid sequence, 154 residues long: Large ribosomal subunit protein uL30 (154 aa).

Belongs to the universal ribosomal protein uL30 family. Part of the 50S ribosomal subunit.

This is Large ribosomal subunit protein uL30 from Methanococcus vannielii.